The following is a 264-amino-acid chain: 3'-5' ssDNA/RNA exonuclease TatD (264 aa).

A divalent metal cation is bound by residues Glu-92, His-128, and His-153.

This sequence belongs to the metallo-dependent hydrolases superfamily. TatD-type hydrolase family. TatD subfamily. As to quaternary structure, monomer. Requires Mg(2+) as cofactor.

The protein localises to the cytoplasm. Functionally, 3'-5' exonuclease that prefers single-stranded DNA and RNA. May play a role in the H(2)O(2)-induced DNA damage repair. The polypeptide is 3'-5' ssDNA/RNA exonuclease TatD (Dickeya dadantii (strain 3937) (Erwinia chrysanthemi (strain 3937))).